The chain runs to 446 residues: MAVTECEWASLGSRIGLRAALVLLSGSLLVVLFPLSGLEHQYRTALNILLQCNLWGGDDRHTFTGQTRGLAVASTAIELLVLKQKPTSDVKFEAKAALNQALEMKRQGKKEKAHKLLHHALKMDPDHVDALNELGILLEEEKDIIQADYLYSKALTISPHNEKALINRDRTLPLVEEIDQRYFSLIDSKVKKLMSIPKGNPALRRVMEESYYHHIYHTVAIEGNTLSLSEIRHIIETRYAVPGKSLEEQNEVIGMHAAMKYVNATLVSRIGSVTIDNILEIHRRILGYVDPVEAGRFRRNQVFVGHHIPPHPRDVEKLMQEFVQWLNSEEAMSLHPVEFAALAHYKLVYIHPFVDGNGRTSRLLMNLILMQAGYPPITVRKEQRSEYYHVLEIANEGDVRPFIRFIAKCTESTLDLLLIATAEHPVGLPEPNHGFSECKQTITIKT.

Topologically, residues 1–18 are cytoplasmic; sequence MAVTECEWASLGSRIGLR. A helical; Signal-anchor for type II membrane protein transmembrane segment spans residues 19 to 39; that stretch reads AALVLLSGSLLVVLFPLSGLE. Residues 40 to 446 are Lumenal-facing; that stretch reads HQYRTALNIL…ECKQTITIKT (407 aa). TPR repeat units follow at residues 94–127 and 128–161; these read AKAA…DPDH and VDAL…SPHN. Positions 218–223 match the Inhibitory (S/T)XXXE(G/N) motif motif; sequence TVAIEG. An ATP-binding site is contributed by glutamate 222. Residue asparagine 263 is glycosylated (N-linked (GlcNAc...) asparagine). One can recognise a Fido domain in the interval 273–408; the sequence is VTIDNILEIH…VRPFIRFIAK (136 aa). 304 to 307 is a binding site for ATP; the sequence is VGHH. Histidine 351 is an active-site residue. ATP-binding positions include 355–362, 387–388, and asparagine 395; these read DGNGRTSR and YY.

It belongs to the fic family. In terms of assembly, homodimer. Requires Mg(2+) as cofactor. Mn(2+) serves as cofactor.

It is found in the endoplasmic reticulum membrane. It catalyses the reaction L-tyrosyl-[protein] + ATP = O-(5'-adenylyl)-L-tyrosyl-[protein] + diphosphate. The enzyme catalyses 3-O-(5'-adenylyl)-L-threonyl-[protein] + H2O = L-threonyl-[protein] + AMP + H(+). It carries out the reaction L-threonyl-[protein] + ATP = 3-O-(5'-adenylyl)-L-threonyl-[protein] + diphosphate. With respect to regulation, the side chain of Glu-222 determines which of the two opposing activities (AMPylase or de-AMPylase) will take place. In response to endoplasmic reticulum stress, mediates de-AMPylase activity. Adenylyltransferase activity is inhibited by the inhibitory helix present at the N-terminus: Glu-222 binds ATP and competes with ATP-binding at Arg-362, thereby preventing adenylyltransferase activity. In unstressed cells, disengagement of Glu-222 promotes adenylyltransferase activity. Activation dissociates ATP-binding from Glu-222, allowing ordered binding of the entire ATP moiety with the alpha-phosphate in an orientation that is productive for accepting an incoming target hydroxyl side chain. Functionally, protein that can both mediate the addition of adenosine 5'-monophosphate (AMP) to specific residues of target proteins (AMPylation), and the removal of the same modification from target proteins (de-AMPylation), depending on the context. The side chain of Glu-222 determines which of the two opposing activities (AMPylase or de-AMPylase) will take place. Acts as a key regulator of the ERN1/IRE1-mediated unfolded protein response (UPR) by mediating AMPylation or de-AMPylation of HSPA5/BiP. In unstressed cells, acts as an adenylyltransferase by mediating AMPylation of HSPA5/BiP at 'Thr-518', thereby inactivating it. In response to endoplasmic reticulum stress, acts as a phosphodiesterase by mediating removal of ATP (de-AMPylation) from HSPA5/BiP at 'Thr-518', leading to restore HSPA5/BiP activity. This is Protein adenylyltransferase FICD from Xenopus tropicalis (Western clawed frog).